The chain runs to 225 residues: NAD(P)H-quinone oxidoreductase subunit K, chloroplastic (225 aa).

Residues cysteine 43, cysteine 44, cysteine 108, and cysteine 139 each contribute to the [4Fe-4S] cluster site.

This sequence belongs to the complex I 20 kDa subunit family. As to quaternary structure, NDH is composed of at least 16 different subunits, 5 of which are encoded in the nucleus. [4Fe-4S] cluster serves as cofactor.

It is found in the plastid. The protein resides in the chloroplast thylakoid membrane. It catalyses the reaction a plastoquinone + NADH + (n+1) H(+)(in) = a plastoquinol + NAD(+) + n H(+)(out). The enzyme catalyses a plastoquinone + NADPH + (n+1) H(+)(in) = a plastoquinol + NADP(+) + n H(+)(out). Functionally, NDH shuttles electrons from NAD(P)H:plastoquinone, via FMN and iron-sulfur (Fe-S) centers, to quinones in the photosynthetic chain and possibly in a chloroplast respiratory chain. The immediate electron acceptor for the enzyme in this species is believed to be plastoquinone. Couples the redox reaction to proton translocation, and thus conserves the redox energy in a proton gradient. The protein is NAD(P)H-quinone oxidoreductase subunit K, chloroplastic of Lactuca sativa (Garden lettuce).